A 418-amino-acid chain; its full sequence is Oxalate:formate antiporter (418 aa).

Helical transmembrane passes span 17-37 (WFYL…QYSW), 48-68 (LGVS…IQAG), 84-104 (IPLM…GMVD), 108-128 (ALYA…GIAM), 141-161 (LASG…LPLI), 172-192 (AAFM…AFVI), 222-242 (FWVL…LVAN), 250-270 (LGLA…FNGG), 288-308 (MSVV…IAAL), 311-331 (VAFI…YALF), 350-370 (FFWA…AAIA), and 378-398 (AFLI…FVIP). An oxalate-binding site is contributed by lysine 355.

It belongs to the major facilitator superfamily. OFA (TC 2.A.1.11) family. In terms of assembly, monomer.

The protein localises to the cell inner membrane. Functionally, anion transporter that carries out the exchange of divalent oxalate with monovalent formate, the product of oxalate decarboxylation, at the plasma membrane, and in doing so catalyzes the vectorial portion of a proton-motive metabolic cycle that drives ATP synthesis. The protein is Oxalate:formate antiporter (oxlT) of Oxalobacter formigenes.